The following is a 251-amino-acid chain: Hydroxyacylglutathione hydrolase (251 aa).

Zn(2+) is bound by residues H53, H55, D57, H58, H110, D127, and H165.

It belongs to the metallo-beta-lactamase superfamily. Glyoxalase II family. As to quaternary structure, monomer. It depends on Zn(2+) as a cofactor.

It carries out the reaction an S-(2-hydroxyacyl)glutathione + H2O = a 2-hydroxy carboxylate + glutathione + H(+). Its pathway is secondary metabolite metabolism; methylglyoxal degradation; (R)-lactate from methylglyoxal: step 2/2. In terms of biological role, thiolesterase that catalyzes the hydrolysis of S-D-lactoyl-glutathione to form glutathione and D-lactic acid. In Edwardsiella ictaluri (strain 93-146), this protein is Hydroxyacylglutathione hydrolase.